A 107-amino-acid polypeptide reads, in one-letter code: Integration host factor subunit beta (107 aa).

The disordered stretch occupies residues 87-107 (RERVNNGTRKNGGSADAASGG).

Belongs to the bacterial histone-like protein family. As to quaternary structure, heterodimer of an alpha and a beta chain.

In terms of biological role, this protein is one of the two subunits of integration host factor, a specific DNA-binding protein that functions in genetic recombination as well as in transcriptional and translational control. This Granulibacter bethesdensis (strain ATCC BAA-1260 / CGDNIH1) protein is Integration host factor subunit beta.